Consider the following 226-residue polypeptide: 7-cyano-7-deazaguanine synthase (226 aa).

8-18 (LSGGLDSTTTL) provides a ligand contact to ATP. Zn(2+)-binding residues include Cys188, Cys198, Cys201, and Cys204.

The protein belongs to the QueC family. Requires Zn(2+) as cofactor.

The enzyme catalyses 7-carboxy-7-deazaguanine + NH4(+) + ATP = 7-cyano-7-deazaguanine + ADP + phosphate + H2O + H(+). It functions in the pathway purine metabolism; 7-cyano-7-deazaguanine biosynthesis. Functionally, catalyzes the ATP-dependent conversion of 7-carboxy-7-deazaguanine (CDG) to 7-cyano-7-deazaguanine (preQ(0)). The polypeptide is 7-cyano-7-deazaguanine synthase (Nitrosomonas eutropha (strain DSM 101675 / C91 / Nm57)).